The primary structure comprises 191 residues: Calcium and integrin-binding protein 1 (191 aa).

The N-myristoyl glycine moiety is linked to residue Gly-2. 2 consecutive EF-hand domains span residues 103 to 138 and 148 to 183; these read TPDIKSHYAFRIFDFDDDGTLNREDLSRLVNCLTGE and EMKQLIDNILEESDIDRDGTINLSEFQHVISRSPDF. Positions 116, 118, 120, 122, 127, 161, 163, 165, 167, and 172 each coordinate Ca(2+). Asp-118 carries the post-translational modification Phosphoserine.

As to quaternary structure, monomer. Interacts with MYO1C. Interacts (via C-terminal region) with PPP3R1 and CACNA1C; the interactions increase upon cardiomyocytes hypertrophy. Interacts with the heterodimeric integrin alpha-IIb/beta3 (ITGA2B-ITGB3). Interacts with ITGA2B (via cytoplasmic domain); the interaction is direct and calcium-dependent. Interacts with the protein kinases PLK2/SNK and PRKDC (via the region immediately upstream of the kinase domain). Interacts with PLK3; the interaction inhibits PLK3 kinase activity. Interacts with PSEN2. Interacts (via C-terminus) with F8. Interacts with NBR1 (via C-terminus). Interacts with FEZ1 (via C-terminus). Interacts with UBR5 (via C-terminus); the interaction is sensitive to DNA damage, and may target CIB1 for ubiquitin-mediated degradation. Interacts with IFI6; the interaction is direct. Interacts with BCL2. Interacts with ITPR3; the interaction occurs in a calcium-dependent manner. Interacts with PTK2/FAK1. Interacts with MAP3K5; the interaction inhibits MAP3K5 activation by phosphorylation, and its subsequent interaction with TRAF2. Isoform 2 interacts with PRKD2 (via N-terminal AP-rich region), PTK2/FAK1 and PAK1. Interacts with TAS1R2 (via C-terminus); the interaction is independent of the myristoylation state of CIB1. Interacts (via C-terminal region) with STMN2 (via the N-terminal region); the interaction is direct, occurs in a calcium-dependent manner and attenuates the STMN2-induced neurite outgrowth inhibition. Interacts with SPHK1, the interaction occurs in a calcium-dependent manner. Interacts with ITGA2B (via C-terminal cytoplasmic tail); the interaction occurs upon platelet aggregation and is stabilized/increased in a calcium and magnesium-dependent manner. Interacts with PAK1 (via N-terminal region); the interaction is direct and occurs in a calcium-dependent manner. Interacts with RAC3 (via C-terminal region); the interaction induces their association with the cytoskeleton upon alpha-IIb/beta3 integrin-mediated adhesion. Interacts with ITGA5 and ITGAV. Interacts and forms a complex with TMC6 and TMC8; the interaction stabilizes each component of the complex. (Microbial infection) Interacts with human papillomavirus 4/HPV4 protein E8, human papillomavirus 5/HPV5 protein E1, and human papillomavirus 16/HPV16 proteins E2 and E5. In terms of processing, phosphorylation of isoform 2 at Ser-118 by PRKD2 increases its ability to stimulate tumor angiogenesis. As to expression, ubiquitously expressed. Expressed in the epidermis, hair follicles and keratinocytes. Detected in platelets and in cell lines of megakaryocytic and erythrocytic lineages. Both isoform 1 and isoform 2 are detected in various cancer cell lines, with isoform 2 being the predominant form (at protein level).

The protein resides in the membrane. It is found in the cell membrane. It localises to the sarcolemma. The protein localises to the apical cell membrane. Its subcellular location is the cell projection. The protein resides in the ruffle membrane. It is found in the filopodium tip. It localises to the growth cone. The protein localises to the lamellipodium. Its subcellular location is the cytoplasm. The protein resides in the cytoskeleton. It is found in the microtubule organizing center. It localises to the centrosome. The protein localises to the perinuclear region. Its subcellular location is the nucleus. The protein resides in the neuron projection. It is found in the perikaryon. It localises to the golgi apparatus. The protein localises to the trans-Golgi network. Calcium-binding protein that plays a role in the regulation of numerous cellular processes, such as cell differentiation, cell division, cell proliferation, cell migration, thrombosis, angiogenesis, cardiac hypertrophy and apoptosis. Involved in bone marrow megakaryocyte differentiation by negatively regulating thrombopoietin-mediated signaling pathway. Participates in the endomitotic cell cycle of megakaryocyte, a form of mitosis in which both karyokinesis and cytokinesis are interrupted. Plays a role in integrin signaling by negatively regulating alpha-IIb/beta3 activation in thrombin-stimulated megakaryocytes preventing platelet aggregation. Up-regulates PTK2/FAK1 activity, and is also needed for the recruitment of PTK2/FAK1 to focal adhesions; it thus appears to play an important role in focal adhesion formation. Positively regulates cell migration on fibronectin in a CDC42-dependent manner, the effect being negatively regulated by PAK1. Functions as a negative regulator of stress activated MAP kinase (MAPK) signaling pathways. Down-regulates inositol 1,4,5-trisphosphate receptor-dependent calcium signaling. Involved in sphingosine kinase SPHK1 translocation to the plasma membrane in a N-myristoylation-dependent manner preventing TNF-alpha-induced apoptosis. Regulates serine/threonine-protein kinase PLK3 activity for proper completion of cell division progression. Plays a role in microtubule (MT) dynamics during neuronal development; disrupts the MT depolymerization activity of STMN2 attenuating NGF-induced neurite outgrowth and the MT reorganization at the edge of lamellipodia. Promotes cardiomyocyte hypertrophy via activation of the calcineurin/NFAT signaling pathway. Stimulates calcineurin PPP3R1 activity by mediating its anchoring to the sarcolemma. In ischemia-induced (pathological or adaptive) angiogenesis, stimulates endothelial cell proliferation, migration and microvessel formation by activating the PAK1 and ERK1/ERK2 signaling pathway. Also promotes cancer cell survival and proliferation. May regulate cell cycle and differentiation of spermatogenic germ cells, and/or differentiation of supporting Sertoli cells. Forms a complex with TMC6/EVER1 and TMC8/EVER2 in lymphocytes and keratynocytes where CIB1 stabilizes TMC6 and TMC8 levels and reciprocally. Functionally, acts as a restriction factor that promotes keratinocyte-intrinsic immunity to human beta-papillomaviruses (HPVs). Its function is as follows. Plays a regulatory role in angiogenesis and tumor growth by mediating PKD/PRKD2-induced vascular endothelial growth factor A (VEGFA) secretion. In Homo sapiens (Human), this protein is Calcium and integrin-binding protein 1 (CIB1).